A 331-amino-acid polypeptide reads, in one-letter code: Phospholipase A2 inhibitor (331 aa).

The N-terminal stretch at 1-23 is a signal peptide; the sequence is MKSSVPSLLIACLVMSLNSYTQQ. An N-linked (GlcNAc...) asparagine glycan is attached at asparagine 35. 8 LRR repeats span residues 78–101, 103–125, 127–149, 150–173, 175–197, 199–221, 223–244, and 245–268; these read LPNL…LFRN, PQLH…IFTN, SSLI…WFQT, LGEL…CFDK, KKLT…MFSG, DNLE…TFHW, PKLT…FFQP, and LEQL…VYKT. An N-linked (GlcNAc...) asparagine glycan is attached at asparagine 125. N-linked (GlcNAc...) asparagine glycosylation occurs at asparagine 232. N-linked (GlcNAc...) asparagine glycosylation is present at asparagine 271. Residues 279–330 form the LRRCT domain; it reads NPWACDCRLDNLLTWVNEHNIHLYSKEEIVCASPKHFKGECATSLHKSQICP.

Homotrimer.

It is found in the secreted. In terms of biological role, inhibits the enzymatic activity of the basic phospholipase A2 (PLA2). This Gloydius brevicaudus siniticus (Chinese mamushi) protein is Phospholipase A2 inhibitor.